A 522-amino-acid chain; its full sequence is Coiled-coil domain-containing protein 149-B (522 aa).

2 coiled-coil regions span residues 1–196 (MANQ…LESK) and 260–287 (IRHQ…LEVS). The segment at 413–522 (ACTAERSEQH…TSPHQECPSS (110 aa)) is disordered. Polar residues-rich tracts occupy residues 429-438 (GGHQSMSTEA), 467-490 (QPVT…TAEQ), and 503-522 (ASLN…CPSS).

This sequence belongs to the CCDC149 family.

This Danio rerio (Zebrafish) protein is Coiled-coil domain-containing protein 149-B (ccdc149b).